The following is a 347-amino-acid chain: DnaJ protein ERDJ3B (347 aa).

Residues 1 to 23 (MAAPRWIGPLLLLLLHFVAAVAG) form the signal peptide. Positions 25–90 (SYYDVLQVPK…EKRKIYDRYG (66 aa)) constitute a J domain.

Interacts with BIP1.

It is found in the endoplasmic reticulum. Functionally, may play a role in protein folding in the endoplasmic reticulum. The sequence is that of DnaJ protein ERDJ3B from Oryza sativa subsp. japonica (Rice).